The sequence spans 139 residues: uncharacterized protein (139 aa).

This is an uncharacterized protein from Aquifex aeolicus (strain VF5).